We begin with the raw amino-acid sequence, 497 residues long: C4-dicarboxylate transport protein (497 aa).

8 helical membrane passes run Leu-27–Tyr-45, Ile-60–Met-82, Ala-95–Val-117, Ile-168–Val-185, Arg-205–Gly-227, Leu-237–Val-259, Ile-348–Ile-370, and Ala-374–Ile-393. Residues Ala-466–Leu-497 are disordered. Basic and acidic residues predominate over residues Gly-475–Pro-484.

This sequence belongs to the dicarboxylate/amino acid:cation symporter (DAACS) (TC 2.A.23) family.

It localises to the cell inner membrane. Its function is as follows. Responsible for the transport of dicarboxylates such as succinate, fumarate, and malate from the periplasm across the inner membrane. This transport system plays an essential role in the energy supply of tropical rhizobium-legume symbionts. This chain is C4-dicarboxylate transport protein (dctA1), found in Sinorhizobium fredii (strain NBRC 101917 / NGR234).